A 366-amino-acid polypeptide reads, in one-letter code: Alanine racemase (366 aa).

The Proton acceptor; specific for D-alanine role is filled by Lys-40. An N6-(pyridoxal phosphate)lysine modification is found at Lys-40. Arg-136 lines the substrate pocket. The Proton acceptor; specific for L-alanine role is filled by Tyr-263. Met-310 is a substrate binding site.

The protein belongs to the alanine racemase family. Requires pyridoxal 5'-phosphate as cofactor.

The catalysed reaction is L-alanine = D-alanine. Its pathway is amino-acid biosynthesis; D-alanine biosynthesis; D-alanine from L-alanine: step 1/1. In terms of biological role, catalyzes the interconversion of L-alanine and D-alanine. May also act on other amino acids. This Streptococcus pyogenes serotype M2 (strain MGAS10270) protein is Alanine racemase (alr).